The primary structure comprises 689 residues: Glycine--tRNA ligase beta subunit (689 aa).

Belongs to the class-II aminoacyl-tRNA synthetase family. In terms of assembly, tetramer of two alpha and two beta subunits.

Its subcellular location is the cytoplasm. The catalysed reaction is tRNA(Gly) + glycine + ATP = glycyl-tRNA(Gly) + AMP + diphosphate. The chain is Glycine--tRNA ligase beta subunit from Salmonella agona (strain SL483).